The primary structure comprises 154 residues: Ribonuclease 1 (154 aa).

This sequence belongs to the BetVI family.

Its subcellular location is the cytoplasm. Functionally, catalyzes the two-stage endonucleolytic cleavage to 3'-phosphomononucleotides and 3'-phosphooligonucleotides with 2',3'-cyclic phosphate intermediates. This is Ribonuclease 1 from Panax ginseng (Korean ginseng).